We begin with the raw amino-acid sequence, 110 residues long: Nucleotide-binding protein HI1146 homolog (110 aa).

This sequence belongs to the RapZ-like family.

Displays ATPase and GTPase activities. This Aggregatibacter actinomycetemcomitans (Actinobacillus actinomycetemcomitans) protein is Nucleotide-binding protein HI1146 homolog.